The primary structure comprises 500 residues: Mucin-like protein 3 (500 aa).

A signal peptide spans 1–27; sequence MAQPTSGLYSTFGFFICLLFFPASWEA. Residues 28–429 are Extracellular-facing; sequence GANTFQELQK…GENNSFPVWA (402 aa). Disordered regions lie at residues 55–198 and 275–324; these read THRA…SQKP and EGKT…PTAS. A compositionally biased stretch (basic and acidic residues) spans 58–71; the sequence is ASSDQKTSRQHPPD. Positions 76 to 89 are enriched in polar residues; that stretch reads TATQKAKNQCNTTR. Asn-108 is a glycosylation site (N-linked (GlcNAc...) asparagine). Composition is skewed to basic and acidic residues over residues 111–123 and 132–142; these read VRHE…EKDL and ARNERSADDPR. Asn-148 is a glycosylation site (N-linked (GlcNAc...) asparagine). Composition is skewed to polar residues over residues 159-178, 279-289, and 298-324; these read PRRN…TTKS, SPASESSSQAQ, and TSAS…PTAS. Residues 430–450 form a helical membrane-spanning segment; the sequence is IVIVILMAVIILLVFIGLILL. At 451–500 the chain is on the cytoplasmic side; sequence VSCASRARHVLTQNSEEPEPQPEDKGSRNSYPVYLMEQQNLNLNQIPSPP.

The protein resides in the cell membrane. It is found in the cytoplasm. Its function is as follows. May modulate NF-kappaB signaling and play a role in cell growth. This chain is Mucin-like protein 3, found in Mus musculus (Mouse).